A 250-amino-acid polypeptide reads, in one-letter code: Glycerol-1-phosphate phosphohydrolase 1 (250 aa).

Residue Asp18 is the Nucleophile of the active site. 2 residues coordinate Mg(2+): Asp18 and Asp20. Asp20 functions as the Proton donor in the catalytic mechanism. Lys64 is covalently cross-linked (Glycyl lysine isopeptide (Lys-Gly) (interchain with G-Cter in SUMO); alternate). Lys64 participates in a covalent cross-link: Glycyl lysine isopeptide (Lys-Gly) (interchain with G-Cter in ubiquitin); alternate. At Ser90 the chain carries Phosphoserine. Residue Lys144 forms a Glycyl lysine isopeptide (Lys-Gly) (interchain with G-Cter in ubiquitin) linkage. Mg(2+) is bound at residue Asp179.

The protein belongs to the HAD-like hydrolase superfamily. DOG/GPP family. In terms of assembly, monomer. Mg(2+) is required as a cofactor.

Its subcellular location is the cytoplasm. It is found in the nucleus. It catalyses the reaction sn-glycerol 1-phosphate + H2O = glycerol + phosphate. The catalysed reaction is sn-glycerol 3-phosphate + H2O = glycerol + phosphate. Functionally, major isoform of glycerol-1-phosphate phosphohydrolase involved in glycerol biosynthesis. Plays a role in osmoadaptation and required for adaptation to anaerobic conditions. The protein is Glycerol-1-phosphate phosphohydrolase 1 of Saccharomyces cerevisiae (strain ATCC 204508 / S288c) (Baker's yeast).